We begin with the raw amino-acid sequence, 88 residues long: RNA-binding protein Hfq (88 aa).

In terms of domain architecture, Sm spans 9-68 (DPYLNVLRKERVPVSIYLVNGIKLQGQVESFDQFVVLLKNTVSQMVYKHAISTVVPSRAV).

This sequence belongs to the Hfq family. As to quaternary structure, homohexamer.

In terms of biological role, RNA chaperone that binds small regulatory RNA (sRNAs) and mRNAs to facilitate mRNA translational regulation in response to envelope stress, environmental stress and changes in metabolite concentrations. Also binds with high specificity to tRNAs. This is RNA-binding protein Hfq from Cellvibrio japonicus (strain Ueda107) (Pseudomonas fluorescens subsp. cellulosa).